The sequence spans 72 residues: Rubredoxin in uptake hydrogenase operon (72 aa).

In terms of domain architecture, Rubredoxin-like spans 19-70; that stretch reads DAVLECKICWHRYDPAVGDEVWQILAGTPFAALPAHWRCPQCDGDREQFMVV. The Fe cation site is built by cysteine 24, cysteine 27, cysteine 57, and cysteine 60.

This sequence belongs to the rubredoxin family. Requires Fe(3+) as cofactor.

Functionally, could be an electron transport intermediate in hydrogen oxidation. This is Rubredoxin in uptake hydrogenase operon (hupR) from Azotobacter chroococcum mcd 1.